Here is a 157-residue protein sequence, read N- to C-terminus: Crossover junction endodeoxyribonuclease RuvC (157 aa).

Catalysis depends on residues Asp-7, Glu-67, and Asp-140. Mg(2+)-binding residues include Asp-7, Glu-67, and Asp-140.

It belongs to the RuvC family. In terms of assembly, homodimer which binds Holliday junction (HJ) DNA. The HJ becomes 2-fold symmetrical on binding to RuvC with unstacked arms; it has a different conformation from HJ DNA in complex with RuvA. In the full resolvosome a probable DNA-RuvA(4)-RuvB(12)-RuvC(2) complex forms which resolves the HJ. Mg(2+) serves as cofactor.

The protein localises to the cytoplasm. The catalysed reaction is Endonucleolytic cleavage at a junction such as a reciprocal single-stranded crossover between two homologous DNA duplexes (Holliday junction).. Its function is as follows. The RuvA-RuvB-RuvC complex processes Holliday junction (HJ) DNA during genetic recombination and DNA repair. Endonuclease that resolves HJ intermediates. Cleaves cruciform DNA by making single-stranded nicks across the HJ at symmetrical positions within the homologous arms, yielding a 5'-phosphate and a 3'-hydroxyl group; requires a central core of homology in the junction. The consensus cleavage sequence is 5'-(A/T)TT(C/G)-3'. Cleavage occurs on the 3'-side of the TT dinucleotide at the point of strand exchange. HJ branch migration catalyzed by RuvA-RuvB allows RuvC to scan DNA until it finds its consensus sequence, where it cleaves and resolves the cruciform DNA. In Rickettsia rickettsii (strain Iowa), this protein is Crossover junction endodeoxyribonuclease RuvC.